A 266-amino-acid chain; its full sequence is Thymidylate synthase (266 aa).

Position 24 (Arg-24) interacts with dUMP. Residue His-54 coordinates (6R)-5,10-methylene-5,6,7,8-tetrahydrofolate. 129-130 (RR) is a binding site for dUMP. The active-site Nucleophile is Cys-149. DUMP contacts are provided by residues 169 to 172 (RSAD), Asn-180, and 210 to 212 (HIY). Asp-172 is a (6R)-5,10-methylene-5,6,7,8-tetrahydrofolate binding site. Residue Ala-265 coordinates (6R)-5,10-methylene-5,6,7,8-tetrahydrofolate.

It belongs to the thymidylate synthase family. Bacterial-type ThyA subfamily. Homodimer.

The protein localises to the cytoplasm. The catalysed reaction is dUMP + (6R)-5,10-methylene-5,6,7,8-tetrahydrofolate = 7,8-dihydrofolate + dTMP. It participates in pyrimidine metabolism; dTTP biosynthesis. Its function is as follows. Catalyzes the reductive methylation of 2'-deoxyuridine-5'-monophosphate (dUMP) to 2'-deoxythymidine-5'-monophosphate (dTMP) while utilizing 5,10-methylenetetrahydrofolate (mTHF) as the methyl donor and reductant in the reaction, yielding dihydrofolate (DHF) as a by-product. This enzymatic reaction provides an intracellular de novo source of dTMP, an essential precursor for DNA biosynthesis. This Mycobacterium ulcerans (strain Agy99) protein is Thymidylate synthase.